A 329-amino-acid polypeptide reads, in one-letter code: Malate dehydrogenase (329 aa).

Position 12–18 (12–18 (GAAGQIG)) interacts with NAD(+). Substrate contacts are provided by Arg95 and Arg101. Residues Asn108, Gln115, and 132-134 (VGN) each bind NAD(+). Residues Asn134 and Arg165 each coordinate substrate. The active-site Proton acceptor is His190.

It belongs to the LDH/MDH superfamily. MDH type 2 family. As to quaternary structure, homodimer.

The catalysed reaction is (S)-malate + NAD(+) = oxaloacetate + NADH + H(+). Its activity is regulated as follows. Substrate inhibition is observed at high concentrations of oxaloacetate. In terms of biological role, catalyzes the reversible oxidation of malate to oxaloacetate. Catalyzes the reduction of oxaloacetate more efficiently than the oxidation of malate. The sequence is that of Malate dehydrogenase from Syntrophobacter fumaroxidans (strain DSM 10017 / MPOB).